The primary structure comprises 164 residues: NADPH-dependent 7-cyano-7-deazaguanine reductase (164 aa).

Cysteine 55 (thioimide intermediate) is an active-site residue. The active-site Proton donor is the aspartate 62. Substrate is bound by residues 77–79 and 96–97; these read VES and HE.

This sequence belongs to the GTP cyclohydrolase I family. QueF type 1 subfamily.

Its subcellular location is the cytoplasm. It catalyses the reaction 7-aminomethyl-7-carbaguanine + 2 NADP(+) = 7-cyano-7-deazaguanine + 2 NADPH + 3 H(+). Its pathway is tRNA modification; tRNA-queuosine biosynthesis. In terms of biological role, catalyzes the NADPH-dependent reduction of 7-cyano-7-deazaguanine (preQ0) to 7-aminomethyl-7-deazaguanine (preQ1). This is NADPH-dependent 7-cyano-7-deazaguanine reductase from Bacillus velezensis (strain DSM 23117 / BGSC 10A6 / LMG 26770 / FZB42) (Bacillus amyloliquefaciens subsp. plantarum).